A 353-amino-acid chain; its full sequence is Protein pelota homolog (353 aa).

Belongs to the eukaryotic release factor 1 family. Pelota subfamily. Monomer. It depends on a divalent metal cation as a cofactor.

It localises to the cytoplasm. In terms of biological role, may function in recognizing stalled ribosomes, interact with stem-loop structures in stalled mRNA molecules, and effect endonucleolytic cleavage of the mRNA. May play a role in the release non-functional ribosomes and degradation of damaged mRNAs. Has endoribonuclease activity. The polypeptide is Protein pelota homolog (Methanopyrus kandleri (strain AV19 / DSM 6324 / JCM 9639 / NBRC 100938)).